We begin with the raw amino-acid sequence, 464 residues long: RCC1-like G exchanging factor-like protein (464 aa).

Residues 1-37 (MALVALVAGARLGRRLSGPGLGRGHWTAAGRSRSRRE) constitute a mitochondrion transit peptide. 7 RCC1 repeats span residues 58–124 (ADRV…LSSK), 128–191 (VTKV…VLTD), 193–247 (EGVF…FLTD), 248–300 (KGEV…AVSA), 302–353 (GGLF…VLNG), 354–411 (EGHV…ALTN), and 412–461 (KGEL…TLAK).

Forms a regulatory protein-RNA complex, consisting of RCC1L, NGRN, RPUSD3, RPUSD4, TRUB2, FASTKD2 and 16S mt-rRNA. Interacts with 16S mt-rRNA; this interaction is direct. Interacts with OPA1; this interaction is direct. As to quaternary structure, asociates with the mitochondrial ribosome large subunit (mt-LSU). In terms of assembly, asociates with the mitochondrial ribosome small subunit (mt-SSU). Ubiquitous.

The protein resides in the mitochondrion membrane. It localises to the mitochondrion inner membrane. In terms of biological role, guanine nucleotide exchange factor (GEF) for mitochondrial dynamin-related GTPase OPA1. Activates OPA1, by exchanging bound GDP for free GTP, and drives OPA1 and MFN1-dependent mitochondrial fusion. Plays an essential role in mitochondrial ribosome biogenesis. As a component of a functional protein-RNA module, consisting of RCC1L, NGRN, RPUSD3, RPUSD4, TRUB2, FASTKD2 and 16S mitochondrial ribosomal RNA (16S mt-rRNA), controls 16S mt-rRNA abundance and is required for intra-mitochondrial translation of core subunits of the oxidative phosphorylation system. Functionally, plays an essential role in mitochondrial ribosome biogenesis via its association with GTPases that play a role in the assembly of the large ribosome subunit. Plays an essential role in mitochondrial ribosome biogenesis via its association with GTPases that play a role in the assembly of the small ribosome subunit. This chain is RCC1-like G exchanging factor-like protein, found in Homo sapiens (Human).